Here is a 169-residue protein sequence, read N- to C-terminus: Ribosome maturation factor RimM (169 aa).

Residues 97-169 (PGEYYWYQLI…VITVDWDMNF (73 aa)) enclose the PRC barrel domain.

It belongs to the RimM family. Binds ribosomal protein uS19.

It localises to the cytoplasm. In terms of biological role, an accessory protein needed during the final step in the assembly of 30S ribosomal subunit, possibly for assembly of the head region. Essential for efficient processing of 16S rRNA. May be needed both before and after RbfA during the maturation of 16S rRNA. It has affinity for free ribosomal 30S subunits but not for 70S ribosomes. The sequence is that of Ribosome maturation factor RimM from Legionella pneumophila subsp. pneumophila (strain Philadelphia 1 / ATCC 33152 / DSM 7513).